Here is a 234-residue protein sequence, read N- to C-terminus: Purine nucleoside phosphorylase DeoD-type (234 aa).

Residue H5 coordinates a purine D-ribonucleoside. Phosphate-binding positions include G21, R25, R44, and 88 to 91; that span reads RVGT. Residues 178 to 180 and 202 to 203 each bind a purine D-ribonucleoside; these read EME and SD. The Proton donor role is filled by D203.

The protein belongs to the PNP/UDP phosphorylase family. Homohexamer; trimer of homodimers.

The enzyme catalyses a purine D-ribonucleoside + phosphate = a purine nucleobase + alpha-D-ribose 1-phosphate. The catalysed reaction is a purine 2'-deoxy-D-ribonucleoside + phosphate = a purine nucleobase + 2-deoxy-alpha-D-ribose 1-phosphate. Its function is as follows. Catalyzes the reversible phosphorolytic breakdown of the N-glycosidic bond in the beta-(deoxy)ribonucleoside molecules, with the formation of the corresponding free purine bases and pentose-1-phosphate. The sequence is that of Purine nucleoside phosphorylase DeoD-type from Lactococcus lactis subsp. lactis (strain IL1403) (Streptococcus lactis).